The primary structure comprises 521 residues: Protein disulfide-isomerase A5 (521 aa).

The signal sequence occupies residues 1 to 25; that stretch reads MARVVPAWLLLPLAVWVVLPTWLSS. 3 consecutive Thioredoxin domains span residues 136-263, 274-386, and 387-508; these read FLKD…NPQP, ADEG…NPES, and PPPP…TLRE. Disulfide bonds link Cys184/Cys187, Cys307/Cys310, and Cys428/Cys431. Residues 518 to 521 carry the Prevents secretion from ER motif; it reads KEEL.

This sequence belongs to the protein disulfide isomerase family.

Its subcellular location is the endoplasmic reticulum lumen. It carries out the reaction Catalyzes the rearrangement of -S-S- bonds in proteins.. The chain is Protein disulfide-isomerase A5 (PDIA5) from Bos taurus (Bovine).